A 237-amino-acid chain; its full sequence is Redox-sensing transcriptional repressor Rex (237 aa).

Residues 45 to 84 constitute a DNA-binding region (H-T-H motif); the sequence is LYYRELHRLLAAGESSTNSRDLGAMVNVSPAVVRRDLSSI. 119 to 124 is a binding site for NAD(+); sequence GVGSLG.

Belongs to the transcriptional regulatory Rex family. As to quaternary structure, homodimer.

Its subcellular location is the cytoplasm. Functionally, modulates transcription in response to changes in cellular NADH/NAD(+) redox state. The sequence is that of Redox-sensing transcriptional repressor Rex from Rhodopirellula baltica (strain DSM 10527 / NCIMB 13988 / SH1).